Reading from the N-terminus, the 703-residue chain is uncharacterized protein (703 aa).

4 consecutive transmembrane segments (helical) span residues 23-43, 69-89, 143-163, and 250-270; these read IAMSGAISAGAYSAGVFDFLI, ALSGASAGAITAAIGVIAAGG, PVISVLNANVLTAIGAEALEA, and PPEWLAFANAALASGAFPIGL. A PNPLA domain is found at 23–335; that stretch reads IAMSGAISAG…INNDPFEFVR (313 aa). The GXSXG motif lies at 72-76; that stretch reads GASAG. Catalysis depends on Ser-74, which acts as the Nucleophile. Asp-322 serves as the catalytic Proton acceptor. Positions 322–324 match the DGA/G motif; it reads DGG. 3 helical membrane passes run 357 to 377, 432 to 452, and 644 to 664; these read VIMIAPFPEGPPFLGDGEPPL, ETFSIASGLLGGFGGFVLEAF, and ILSTLAGAAGANCQVWLAPWT.

It is found in the cell membrane. This is an uncharacterized protein from Sinorhizobium fredii (strain NBRC 101917 / NGR234).